The primary structure comprises 601 residues: Leucine zipper putative tumor suppressor 1 (601 aa).

Gly2 carries the N-myristoyl glycine lipid modification. The disordered stretch occupies residues 135–190 (GAILHSSPESTNHQLHPMPPDKPKEQELKPGLCSGALSDSGRNSMSSLPTHSTTSS). Over residues 153–162 (PPDKPKEQEL) the composition is skewed to basic and acidic residues. Positions 174 to 190 (SGRNSMSSLPTHSTTSS) are enriched in polar residues. The stretch at 255 to 573 (PLSTDECTIQ…RLEKALQQLA (319 aa)) forms a coiled coil.

This sequence belongs to the LZTS family. Binds EEF1G, TLK2 and CDK1. Post-translationally, phosphorylated on serine residues. Hyperphosphorylated by the cAMP-dependent kinase PKA during cell-cycle progression. In terms of tissue distribution, highly expressed in brain, in particular in cortex, the CA2 region of the hippocampus, olfactory bulb, striatum and pons. Not detectable in the other tissues tested.

The protein localises to the cytoplasm. It localises to the cell membrane. The protein resides in the cell projection. Its subcellular location is the dendritic spine. It is found in the postsynaptic density. The protein localises to the synapse. Its function is as follows. Involved in the regulation of cell growth. May stabilize the active CDC2-cyclin B1 complex and thereby contribute to the regulation of the cell cycle and the prevention of uncontrolled cell proliferation. May act as tumor suppressor. The protein is Leucine zipper putative tumor suppressor 1 (Lzts1) of Rattus norvegicus (Rat).